The primary structure comprises 473 residues: Ribulose bisphosphate carboxylase large chain (473 aa).

The propeptide occupies 1–2 (MS). 2 residues coordinate substrate: asparagine 123 and threonine 173. Lysine 175 serves as the catalytic Proton acceptor. Substrate is bound at residue lysine 177. Mg(2+) is bound by residues lysine 201, aspartate 203, and glutamate 204. The residue at position 201 (lysine 201) is an N6-carboxylysine. Phosphoserine is present on serine 208. Histidine 294 serves as the catalytic Proton acceptor. Substrate contacts are provided by arginine 295 and histidine 327. At threonine 330 the chain carries Phosphothreonine. Position 379 (serine 379) interacts with substrate.

Belongs to the RuBisCO large chain family. Type I subfamily. As to quaternary structure, heterohexadecamer of 8 large chains and 8 small chains; disulfide-linked. The disulfide link is formed within the large subunit homodimers. It depends on Mg(2+) as a cofactor. Post-translationally, the disulfide bond which can form in the large chain dimeric partners within the hexadecamer appears to be associated with oxidative stress and protein turnover.

It is found in the plastid. The protein resides in the chloroplast. It carries out the reaction 2 (2R)-3-phosphoglycerate + 2 H(+) = D-ribulose 1,5-bisphosphate + CO2 + H2O. The catalysed reaction is D-ribulose 1,5-bisphosphate + O2 = 2-phosphoglycolate + (2R)-3-phosphoglycerate + 2 H(+). Its function is as follows. RuBisCO catalyzes two reactions: the carboxylation of D-ribulose 1,5-bisphosphate, the primary event in carbon dioxide fixation, as well as the oxidative fragmentation of the pentose substrate in the photorespiration process. Both reactions occur simultaneously and in competition at the same active site. The polypeptide is Ribulose bisphosphate carboxylase large chain (Sinapis alba (White mustard)).